The following is a 469-amino-acid chain: Sulfate adenylyltransferase subunit 1 (469 aa).

The tr-type G domain maps to 22 to 236 (KDMLRFLTCG…TLENIEIGND (215 aa)). The G1 stretch occupies residues 31 to 38 (GSVDDGKS). Residue 31-38 (GSVDDGKS) coordinates GTP. Residues 89–93 (GITID) are G2. The tract at residues 110–113 (DTPG) is G3. Residues 110-114 (DTPGH) and 165-168 (NKMD) each bind GTP. Residues 165 to 168 (NKMD) form a G4 region. A G5 region spans residues 202–204 (SAL).

Belongs to the TRAFAC class translation factor GTPase superfamily. Classic translation factor GTPase family. CysN/NodQ subfamily. As to quaternary structure, heterodimer composed of CysD, the smaller subunit, and CysN.

It catalyses the reaction sulfate + ATP + H(+) = adenosine 5'-phosphosulfate + diphosphate. Its pathway is sulfur metabolism; hydrogen sulfide biosynthesis; sulfite from sulfate: step 1/3. In terms of biological role, with CysD forms the ATP sulfurylase (ATPS) that catalyzes the adenylation of sulfate producing adenosine 5'-phosphosulfate (APS) and diphosphate, the first enzymatic step in sulfur assimilation pathway. APS synthesis involves the formation of a high-energy phosphoric-sulfuric acid anhydride bond driven by GTP hydrolysis by CysN coupled to ATP hydrolysis by CysD. In Pseudoalteromonas atlantica (strain T6c / ATCC BAA-1087), this protein is Sulfate adenylyltransferase subunit 1.